A 427-amino-acid chain; its full sequence is Trigger factor (427 aa).

The region spanning 163 to 248 (GDTVVIDFVG…VNEVKAKELP (86 aa)) is the PPIase FKBP-type domain.

It belongs to the FKBP-type PPIase family. Tig subfamily.

The protein localises to the cytoplasm. It carries out the reaction [protein]-peptidylproline (omega=180) = [protein]-peptidylproline (omega=0). In terms of biological role, involved in protein export. Acts as a chaperone by maintaining the newly synthesized protein in an open conformation. Functions as a peptidyl-prolyl cis-trans isomerase. This is Trigger factor from Lactococcus lactis subsp. cremoris (strain SK11).